The primary structure comprises 122 residues: ATP-dependent Clp protease adapter protein ClpS (122 aa).

The disordered stretch occupies residues 1-27 (MVRMATKPPSMTPTPPTGAPPRDDGGS). Pro residues predominate over residues 10-19 (SMTPTPPTGA).

It belongs to the ClpS family. Binds to the N-terminal domain of the chaperone ClpA.

Functionally, involved in the modulation of the specificity of the ClpAP-mediated ATP-dependent protein degradation. The sequence is that of ATP-dependent Clp protease adapter protein ClpS from Paracidovorax citrulli (strain AAC00-1) (Acidovorax citrulli).